The primary structure comprises 333 residues: Beta-ketoacyl-[acyl-carrier-protein] synthase III (333 aa).

Residues Cys-122 and His-258 contribute to the active site. The tract at residues 259–263 (QANER) is ACP-binding. Asn-289 is a catalytic residue.

This sequence belongs to the thiolase-like superfamily. FabH family. As to quaternary structure, homodimer.

Its subcellular location is the cytoplasm. It catalyses the reaction butanoyl-CoA + malonyl-[ACP] + H(+) = 3-oxohexanoyl-[ACP] + CO2 + CoA. The enzyme catalyses malonyl-[ACP] + acetyl-CoA + H(+) = 3-oxobutanoyl-[ACP] + CO2 + CoA. It carries out the reaction 2-methylpropanoyl-CoA + malonyl-[ACP] + H(+) = 4-methyl-3-oxopentanoyl-[ACP] + CO2 + CoA. It participates in lipid metabolism; fatty acid biosynthesis. Inhibited by thiolactomycin. Its function is as follows. Catalyzes the condensation reaction of fatty acid synthesis by the addition to an acyl acceptor of two carbons from malonyl-ACP. Catalyzes the first condensation reaction which initiates fatty acid synthesis and may therefore play a role in governing the total rate of fatty acid production. Possesses both acetoacetyl-ACP synthase and acetyl transacylase activities. Utilizes both straight and branched-chain acyl-CoAs. The order of reactivity with the various acyl-CoA substrates at saturation is butanoyl-CoA &gt; acetyl-CoA &gt; 2-methylpropanoyl-CoA (or isobutyryl-CoA). Not involved in tetracenomycin C (TCM C) biosynthesis. This Streptomyces glaucescens protein is Beta-ketoacyl-[acyl-carrier-protein] synthase III (fabH).